Consider the following 601-residue polypeptide: Glutathione-regulated potassium-efflux system protein KefB (601 aa).

13 helical membrane-spanning segments follow: residues 4 to 24, 29 to 49, 55 to 75, 87 to 107, 115 to 135, 152 to 172, 177 to 197, 207 to 227, 230 to 250, 268 to 288, 291 to 311, 324 to 344, and 356 to 376; these read SDFLLAGVLFLFAAVAAVPLA, IGAVLGYLLAGIAIGPWGLGF, EILHFSELGVVFLMFIIGLEL, IFGVGAAQVLLSAALLAGLLM, AAVVGGIGLAMSSTAMALQLM, VLLFQDLAVIPALALVPLLAG, HFDWMKIGIKVLAFVGMLIGG, FIAASGVREVFTAATLLLVLG, LFMDALGLSMALGTFIAGVLL, GLLLGLFFISVGMSLNLGVLY, LLWVVISVVVLVAVKILVLYL, MQFAGVLSQGGEFAFVLFSTA, and ALLLVTVTLSMMTTPLLMKLV. Residues 400–519 enclose the RCK N-terminal domain; the sequence is KPQVIVVGFG…AGVTQFSRET (120 aa).

This sequence belongs to the monovalent cation:proton antiporter 2 (CPA2) transporter (TC 2.A.37) family. KefB subfamily. Interacts with the regulatory subunit KefG.

Its subcellular location is the cell inner membrane. Pore-forming subunit of a potassium efflux system that confers protection against electrophiles. Catalyzes K(+)/H(+) antiport. This chain is Glutathione-regulated potassium-efflux system protein KefB, found in Escherichia coli (strain ATCC 8739 / DSM 1576 / NBRC 3972 / NCIMB 8545 / WDCM 00012 / Crooks).